A 795-amino-acid chain; its full sequence is Protein Jade-3 (795 aa).

A compositionally biased stretch (low complexity) spans 1-25 (MKRLRTPSSSDSSDNESPSTSFSSN). The interval 1–41 (MKRLRTPSSSDSSDNESPSTSFSSNKYGSKPGTPASAQKKP) is disordered. Residues 201–251 (DVICDVCRSPDSEEGNDMVFCDKCNICVHQACYGIVKVPDGNWLCRTCVLG) form a PHD-type 1 zinc finger. A C2HC pre-PHD-type zinc finger spans residues 253–287 (TPQCLLCPKTGGAMKATRAGTKWAHVSCALWIPEV). The PHD-type 2 zinc finger occupies 311-367 (LICSLCKLKTGACIQCSVKNCTIPFHVTCAFEHSLEMKTILDEGDEVKFKSYCLKHS). 3 disordered regions span residues 630-654 (HGQSSNGKTKNEAEKSRQIKSNGIL), 667-687 (AASEKDPRSEISGKSQSSGFH), and 714-795 (FEKN…SVQR). Composition is skewed to polar residues over residues 678 to 687 (SGKSQSSGFH) and 720 to 732 (KSSGFSKPLSTER).

It belongs to the JADE family. As to quaternary structure, component of the HBO1 complex.

Scaffold subunit of some HBO1 complexes, which have a histone H4 acetyltransferase activity. This chain is Protein Jade-3 (jade3), found in Danio rerio (Zebrafish).